Here is a 118-residue protein sequence, read N- to C-terminus: UPF0295 protein GWCH70_0499 (118 aa).

2 helical membrane-spanning segments follow: residues 12–32 and 42–62; these read IRTFALSLIFVGFIVMYIGIF and LFMILGLLFIIASTVVYFWIG.

Belongs to the UPF0295 family.

The protein resides in the cell membrane. The protein is UPF0295 protein GWCH70_0499 of Geobacillus sp. (strain WCH70).